A 342-amino-acid chain; its full sequence is S-adenosylmethionine:tRNA ribosyltransferase-isomerase (342 aa).

Belongs to the QueA family. In terms of assembly, monomer.

The protein resides in the cytoplasm. It carries out the reaction 7-aminomethyl-7-carbaguanosine(34) in tRNA + S-adenosyl-L-methionine = epoxyqueuosine(34) in tRNA + adenine + L-methionine + 2 H(+). It functions in the pathway tRNA modification; tRNA-queuosine biosynthesis. Functionally, transfers and isomerizes the ribose moiety from AdoMet to the 7-aminomethyl group of 7-deazaguanine (preQ1-tRNA) to give epoxyqueuosine (oQ-tRNA). The sequence is that of S-adenosylmethionine:tRNA ribosyltransferase-isomerase from Campylobacter jejuni subsp. jejuni serotype O:23/36 (strain 81-176).